The sequence spans 192 residues: Probable thymidylate kinase (192 aa).

8–15 serves as a coordination point for ATP; it reads GIDGSGKS.

Belongs to the thymidylate kinase family.

The catalysed reaction is dTMP + ATP = dTDP + ADP. In Pyrobaculum aerophilum (strain ATCC 51768 / DSM 7523 / JCM 9630 / CIP 104966 / NBRC 100827 / IM2), this protein is Probable thymidylate kinase.